A 360-amino-acid chain; its full sequence is MSILRAKTSGAQQHEEFRMAFKLSYITGRQDNNVLEVTLAAGQNAVVHATVKNTGTEALNLLKYGTLFDSAPVQKVDVYEGENAVPFKGILRSIQRTDLAPEVFHTLAAGETFETTFNAAEVHDLSSTNYTFIAEGTIPVAPVGSTKISDTIFFKSNTLTIPVDGAAAQSMAKAIPASIDRRTILQSGCSTTQKTQTTQALSYCAQLARAASTAASSGSATKFSEYFKTTAAATRSVVAARLSAVASQCSSLTSGSTTYYCTDIYNYCSSNVLAYTIPSTNEIVNCPLYYSALPTLSGTCHAQDRATTSLHEFTHAPATYSPGTADNGYGYSAAVALTSAKAVLNADSYALYANAIYVGC.

The N-linked (GlcNAc...) asparagine glycan is linked to Asn129. Cystine bridges form between Cys189/Cys261 and Cys268/Cys286. His311 contributes to the Zn(2+) binding site. Glu312 is an active-site residue. Zn(2+)-binding residues include His315 and Asp326.

The protein belongs to the peptidase M35 family. It depends on Zn(2+) as a cofactor.

The protein localises to the secreted. It catalyses the reaction Preferential cleavage of bonds with hydrophobic residues in P1'. Also 3-Asn-|-Gln-4 and 8-Gly-|-Ser-9 bonds in insulin B chain.. In terms of biological role, secreted metalloproteinase that allows assimilation of proteinaceous substrates. Shows high activities on basic nuclear substrates such as histone and protamine. The chain is Neutral protease 2 homolog SS1G_13741 from Sclerotinia sclerotiorum (strain ATCC 18683 / 1980 / Ss-1) (White mold).